The sequence spans 291 residues: DNA N6-methyl adenine demethylase (291 aa).

The Fe2OG dioxygenase domain maps to G85–R256. L171–Y173 lines the 2-oxoglutarate pocket. Residues H184, D186, and H239 each contribute to the Fe cation site.

The protein belongs to the alkB family. In terms of assembly, interacts with top-2; the interaction is required for localization of top-2 to DNA. Also interacts with mtss-1, his-24, ule-3, C18B2.3, pgl-1, ceh-93, mcm-4 and F37C4.5. Fe(2+) serves as cofactor.

It is found in the nucleus. The enzyme catalyses an N(6)-methyl-2'-deoxyadenosine in DNA + 2-oxoglutarate + O2 = a 2'-deoxyadenosine in DNA + formaldehyde + succinate + CO2. Functionally, dioxygenase that specifically demethylates DNA methylated on the 6th position of adenine (N(6)-methyladenosine) DNA. N(6)-methyladenosine (m6A) DNA is involved in epigenetic transgenerational inheritance. Plays an essential role in DNA replication and repair in the germline during meiosis. Binds to components of the DNA replication machinery such as top-2, and directs their localization to DNA to control DNA replication. This is DNA N6-methyl adenine demethylase from Caenorhabditis elegans.